The primary structure comprises 358 residues: Variant-surface-glycoprotein phospholipase C (358 aa).

One can recognise a PI-PLC X-box domain in the interval Ile25–Arg198.

In terms of assembly, monomer. In terms of processing, the N-terminus is blocked.

Its subcellular location is the membrane. It carries out the reaction a 6-(alpha-D-glucosaminyl)-1-(1,2-diacyl-sn-glycero-3-phospho)-1D-myo-inositol = 6-(alpha-D-glucosaminyl)-1D-myo-inositol 1,2-cyclic phosphate + a 1,2-diacyl-sn-glycerol. Its function is as follows. By hydrolysis of the attached glycolipid, releases soluble variant surface glycoprotein containing phosphoinositol from the cell wall of T.brucei after cell lysis. It also cleaves similar membrane anchors on some mammalian proteins. VSG lipase may play a role in processes such as parasite differentiation or antigenic variation. In Trypanosoma brucei brucei, this protein is Variant-surface-glycoprotein phospholipase C.